A 270-amino-acid chain; its full sequence is ATP synthase subunit a (270 aa).

Helical transmembrane passes span N37–F57, V98–I118, D143–I163, V217–P237, and A239–V259.

Belongs to the ATPase A chain family. F-type ATPases have 2 components, CF(1) - the catalytic core - and CF(0) - the membrane proton channel. CF(1) has five subunits: alpha(3), beta(3), gamma(1), delta(1), epsilon(1). CF(0) has three main subunits: a(1), b(2) and c(9-12). The alpha and beta chains form an alternating ring which encloses part of the gamma chain. CF(1) is attached to CF(0) by a central stalk formed by the gamma and epsilon chains, while a peripheral stalk is formed by the delta and b chains.

Its subcellular location is the cell inner membrane. In terms of biological role, key component of the proton channel; it plays a direct role in the translocation of protons across the membrane. This Aliivibrio salmonicida (strain LFI1238) (Vibrio salmonicida (strain LFI1238)) protein is ATP synthase subunit a.